A 522-amino-acid chain; its full sequence is DNA primase DnaG (522 aa).

The Toprim domain maps to 171-257 (DAIIILEGRA…CVEDLVQKEI (87 aa)). 3 residues coordinate Mg(2+): E177, D219, and D221.

It belongs to the archaeal DnaG primase family. As to quaternary structure, forms a ternary complex with MCM helicase and DNA. Component of the archaeal exosome complex. Mg(2+) is required as a cofactor.

It carries out the reaction ssDNA + n NTP = ssDNA/pppN(pN)n-1 hybrid + (n-1) diphosphate.. RNA polymerase that catalyzes the synthesis of short RNA molecules used as primers for DNA polymerase during DNA replication. Also part of the exosome, which is a complex involved in RNA degradation. Acts as a poly(A)-binding protein that enhances the interaction between heteromeric, adenine-rich transcripts and the exosome. The chain is DNA primase DnaG from Methanosarcina mazei (strain ATCC BAA-159 / DSM 3647 / Goe1 / Go1 / JCM 11833 / OCM 88) (Methanosarcina frisia).